The sequence spans 70 residues: Brevinin-1MT1 (70 aa).

A signal peptide spans 1–22 (MFTLKKSLLLLFFLGTINLSLC). Positions 23 to 44 (EQERDADEEERRDDDEMDVEVE) are excised as a propeptide. C64 and C70 are oxidised to a cystine.

It belongs to the frog skin active peptide (FSAP) family. Brevinin subfamily. As to expression, expressed by the skin glands.

The protein localises to the secreted. Its function is as follows. Antimicrobial peptide with activity against a variety of Gram-negative and Gram-positive bacteria and against fungi. Shows strong hemolytic activity against human erythrocytes. The protein is Brevinin-1MT1 of Amolops mantzorum (Sichuan torrent frog).